Consider the following 411-residue polypeptide: Anaerobic sulfatase-maturating enzyme homolog AslB (411 aa).

The Radical SAM core domain maps to glutamine 3–lysine 250. Cysteine 21 and cysteine 25 together coordinate [4Fe-4S] cluster. Tyrosine 27 contacts S-adenosyl-L-methionine. Residue cysteine 28 coordinates [4Fe-4S] cluster. Residues glycine 74, serine 129, and arginine 141 each contribute to the S-adenosyl-L-methionine site. [4Fe-4S] cluster is bound by residues cysteine 276, cysteine 282, and cysteine 297. The active-site Proton acceptor is the aspartate 298. The [4Fe-4S] cluster site is built by cysteine 339, cysteine 342, cysteine 348, cysteine 352, and cysteine 371.

It belongs to the radical SAM superfamily. Anaerobic sulfatase-maturating enzyme family. It depends on [4Fe-4S] cluster as a cofactor.

The protein is Anaerobic sulfatase-maturating enzyme homolog AslB (aslB) of Escherichia coli (strain K12).